The chain runs to 99 residues: Large ribosomal subunit protein bL21 (99 aa).

It belongs to the bacterial ribosomal protein bL21 family. In terms of assembly, part of the 50S ribosomal subunit. Contacts protein L20.

Its function is as follows. This protein binds to 23S rRNA in the presence of protein L20. This chain is Large ribosomal subunit protein bL21, found in Neorickettsia sennetsu (strain ATCC VR-367 / Miyayama) (Ehrlichia sennetsu).